The sequence spans 235 residues: Peroxisomal membrane protein 11C (235 aa).

Residues 1-91 (MSTLETTRAE…LPLVLLGKSK (91 aa)) lie on the Cytoplasmic side of the membrane. A helical transmembrane segment spans residues 92 to 108 (NALLSTFLFLDQIVWLG). Over 109–206 (RTGIYKDKER…LLQLAPKKVT (98 aa)) the chain is Lumenal. A helical membrane pass occupies residues 207-226 (PRVTGAFGFASSLISCYQLL). At 227 to 235 (PSHPKSKMV) the chain is on the cytoplasmic side.

This sequence belongs to the peroxin-11 family. As to quaternary structure, homooligomer. Interacts with ARC5 and FIS1B on peroxisomes. In terms of tissue distribution, expressed in roots and developing siliques.

It is found in the peroxisome membrane. Functionally, involved in peroxisomal proliferation. Promotes peroxisomal duplication, aggregation or elongation without fission. The protein is Peroxisomal membrane protein 11C (PEX11C) of Arabidopsis thaliana (Mouse-ear cress).